Consider the following 175-residue polypeptide: Alpha-crystallin B chain (175 aa).

M1 is modified (N-acetylmethionine). A Phosphoserine modification is found at S19. Residue S41 is glycosylated (O-linked (GlcNAc) serine). Residues S45 and S59 each carry the phosphoserine modification. Residues 56-164 (RAPSWIDTGL…PERTIPITRE (109 aa)) enclose the sHSP domain. H83 is a Zn(2+) binding site. Position 92 is an N6-acetyllysine (K92). Zn(2+)-binding residues include H104, E106, H111, and H119. Residues 142 to 175 (VLTVNGPRKQASGPERTIPITREEKPAVTAAPKK) form a disordered region. An N6-acetyllysine modification is found at K166. T170 carries O-linked (GlcNAc) threonine glycosylation.

It belongs to the small heat shock protein (HSP20) family. Heteromer composed of three CRYAA and one CRYAB subunits. Aggregates with homologous proteins, including the small heat shock protein HSPB1, to form large heteromeric complexes. Inter-subunit bridging via zinc ions enhances stability, which is crucial as there is no protein turn over in the lens. Interacts with HSPBAP1 and TTN/titin. Interacts with TMEM109; in the cellular response to DNA damage. Interacts with DES; binds rapidly during early stages of DES filament assembly and a reduced binding seen in the later stages. Interacts with ATP6V1A and with MTOR, forming a ternary complex. Lens as well as other tissues.

The protein localises to the cytoplasm. Its subcellular location is the nucleus. It localises to the secreted. The protein resides in the lysosome. May contribute to the transparency and refractive index of the lens. Has chaperone-like activity, preventing aggregation of various proteins under a wide range of stress conditions. In lens epithelial cells, stabilizes the ATP6V1A protein, preventing its degradation by the proteasome. This is Alpha-crystallin B chain (CRYAB) from Spalax judaei (Judean Mountains blind mole rat).